A 112-amino-acid chain; its full sequence is Macrodomain Ori protein (112 aa).

The interval 91–112 (FHTLSGGKPQVEGAEDYTDSDD) is disordered. Positions 103–112 (GAEDYTDSDD) are enriched in acidic residues.

It belongs to the MaoP family.

Functionally, involved in the organization of the Ori region of the chromosome into a macrodomain (MD). It constrains DNA mobility in the Ori macrodomain and limits long-distance DNA interactions with other chromosomal regions. The sequence is that of Macrodomain Ori protein from Escherichia coli O157:H7.